The primary structure comprises 352 residues: Uroporphyrinogen decarboxylase (352 aa).

Residues 26 to 30 (RQAGR), Phe-45, Asp-76, Tyr-153, Ser-208, and His-323 each bind substrate.

Belongs to the uroporphyrinogen decarboxylase family. In terms of assembly, homodimer.

It is found in the cytoplasm. It carries out the reaction uroporphyrinogen III + 4 H(+) = coproporphyrinogen III + 4 CO2. It functions in the pathway porphyrin-containing compound metabolism; protoporphyrin-IX biosynthesis; coproporphyrinogen-III from 5-aminolevulinate: step 4/4. Its function is as follows. Catalyzes the decarboxylation of four acetate groups of uroporphyrinogen-III to yield coproporphyrinogen-III. This chain is Uroporphyrinogen decarboxylase, found in Prochlorococcus marinus (strain MIT 9313).